The following is a 273-amino-acid chain: Polyamine aminopropyltransferase (273 aa).

The PABS domain maps to 5–238; it reads ENWFSERYSD…GFWSFTIASE (234 aa). Position 34 (Gln-34) interacts with S-methyl-5'-thioadenosine. 2 residues coordinate spermidine: His-65 and Asp-90. Residues Glu-109 and 140–141 contribute to the S-methyl-5'-thioadenosine site; that span reads DG. The Proton acceptor role is filled by Asp-158. Spermidine is bound at residue 158–161; the sequence is DSTD. Pro-165 serves as a coordination point for S-methyl-5'-thioadenosine.

Belongs to the spermidine/spermine synthase family. As to quaternary structure, homodimer or homotetramer.

The protein resides in the cytoplasm. The catalysed reaction is S-adenosyl 3-(methylsulfanyl)propylamine + putrescine = S-methyl-5'-thioadenosine + spermidine + H(+). It participates in amine and polyamine biosynthesis; spermidine biosynthesis; spermidine from putrescine: step 1/1. Functionally, catalyzes the irreversible transfer of a propylamine group from the amino donor S-adenosylmethioninamine (decarboxy-AdoMet) to putrescine (1,4-diaminobutane) to yield spermidine. The chain is Polyamine aminopropyltransferase from Thermoplasma volcanium (strain ATCC 51530 / DSM 4299 / JCM 9571 / NBRC 15438 / GSS1).